A 745-amino-acid chain; its full sequence is Probable copper-transporting ATPase PacS (745 aa).

Residues 1 to 94 (MAQTINLQLE…PVFSAKLVTG (94 aa)) are Cytoplasmic-facing. The region spanning 3–68 (QTINLQLEGM…AVERAGYHAR (66 aa)) is the HMA domain. Cysteine 14 and cysteine 17 together coordinate a metal cation. A helical transmembrane segment spans residues 95 to 115 (LVISAVLFFGSLPMMLGVNIP). Residues 116–125 (HFPHIFHDPW) are Extracellular-facing. Residues 126-145 (LQWLLATPVQFWSGAEFYRG) form a helical membrane-spanning segment. At 146–152 (AWKSVRT) the chain is on the cytoplasmic side. A helical transmembrane segment spans residues 153–173 (RSATMDTLVALGTSAAYFYSV). The Extracellular segment spans residues 174–193 (AITLFPQWLTSQGLAAHVYF). A helical membrane pass occupies residues 194-214 (EAAAVVITLILLGRSLEQRAR). Residues 215–342 (RETSAAIRKL…KAPIQHFVDR (128 aa)) are Cytoplasmic-facing. The chain crosses the membrane as a helical span at residues 343–365 (ITHWFVPTVIVVAIAAFCIWWLT). Over 366–372 (TGNITLA) the chain is Extracellular. Residues 373–390 (VLTLVEVLIIACPCALGL) form a helical membrane-spanning segment. At 391–543 (ATPTSVMVGT…QAQQWEKEQK (153 aa)) the chain is on the cytoplasmic side. The 4-aspartylphosphate intermediate role is filled by aspartate 428. The helical transmembrane segment at 544–564 (TVIWLAVDTEVKALLAIADAI) threads the bilayer. The Extracellular segment spans residues 565–687 (KPSSPQVVQA…KLSRATMGNI (123 aa)). Mg(2+)-binding residues include aspartate 633 and aspartate 637. The chain crosses the membrane as a helical span at residues 688 to 707 (RQNLFFAFIYNVIGIPVAAG). Residues 708-719 (LFYPLFGLLLNP) lie on the Cytoplasmic side of the membrane. Residues 720 to 738 (ILAGAAMAFSSVSVVTNAL) traverse the membrane as a helical segment. Residues 739-745 (RLKKFCP) are Extracellular-facing.

It belongs to the cation transport ATPase (P-type) (TC 3.A.3) family. Type IB subfamily.

The protein resides in the cell membrane. It carries out the reaction Cu(+)(in) + ATP + H2O = Cu(+)(out) + ADP + phosphate + H(+). May play a role in the osmotic adaptation. The chain is Probable copper-transporting ATPase PacS (pacS) from Synechocystis sp. (strain ATCC 27184 / PCC 6803 / Kazusa).